Here is a 60-residue protein sequence, read N- to C-terminus: Metallothionein-like protein EMB30 (60 aa).

Belongs to the metallothionein superfamily. Type 15 family.

Functionally, metallothioneins have a high content of cysteine residues that bind various heavy metals. The protein is Metallothionein-like protein EMB30 (EMB30) of Picea glauca (White spruce).